Here is a 211-residue protein sequence, read N- to C-terminus: Protein GrpE (211 aa).

Residues 1–13 (MVDKDEEQIKQNV) show a composition bias toward basic and acidic residues. A disordered region spans residues 1 to 38 (MVDKDEEQIKQNVEEDLSSTVEQTGEENIEFPSAPNHP).

It belongs to the GrpE family. In terms of assembly, homodimer.

Its subcellular location is the cytoplasm. Participates actively in the response to hyperosmotic and heat shock by preventing the aggregation of stress-denatured proteins, in association with DnaK and GrpE. It is the nucleotide exchange factor for DnaK and may function as a thermosensor. Unfolded proteins bind initially to DnaJ; upon interaction with the DnaJ-bound protein, DnaK hydrolyzes its bound ATP, resulting in the formation of a stable complex. GrpE releases ADP from DnaK; ATP binding to DnaK triggers the release of the substrate protein, thus completing the reaction cycle. Several rounds of ATP-dependent interactions between DnaJ, DnaK and GrpE are required for fully efficient folding. In Protochlamydia amoebophila (strain UWE25), this protein is Protein GrpE.